Reading from the N-terminus, the 172-residue chain is C-phycocyanin beta chain (172 aa).

The residue at position 72 (N72) is an N4-methylasparagine. Residues C82 and C153 each coordinate (2R,3E)-phycocyanobilin.

This sequence belongs to the phycobiliprotein family. Heterodimer of an alpha and a beta subunit, which further assembles into trimers and the trimers into hexamers. The basic functional unit of phycobiliproteins is a ring-shaped hexamer formed from two back-to-back trimers contacting via the alpha chain subunits. The trimers are composed of alpha/beta subunit heterodimers arranged around a three-fold axis of symmetry. The phycoerythrins also contain a gamma subunit which is located in the center of the hexamer. Post-translationally, contains two covalently linked bilin chromophores.

The protein localises to the plastid. Its subcellular location is the chloroplast thylakoid membrane. Functionally, light-harvesting photosynthetic bile pigment-protein from the phycobiliprotein complex (phycobilisome, PBS). Phycocyanin is the major phycobiliprotein in the PBS rod. This chain is C-phycocyanin beta chain (cpcB), found in Rhodella violacea (Red alga).